The following is a 94-amino-acid chain: MLKPLGDRVVIEAISKDEMTASGIVLPDSAKEKPQEGRVIAVGSGRVADNGERIALEVKDGDKVIFSKYAGTEVKVDNKEYLVLRESDILAIIG.

It belongs to the GroES chaperonin family. Heptamer of 7 subunits arranged in a ring. Interacts with the chaperonin GroEL.

The protein resides in the cytoplasm. Together with the chaperonin GroEL, plays an essential role in assisting protein folding. The GroEL-GroES system forms a nano-cage that allows encapsulation of the non-native substrate proteins and provides a physical environment optimized to promote and accelerate protein folding. GroES binds to the apical surface of the GroEL ring, thereby capping the opening of the GroEL channel. This is Co-chaperonin GroES from Brevibacillus choshinensis.